We begin with the raw amino-acid sequence, 339 residues long: MSTVHEILCKLSLEGDHSTPPSAYGSVKPYTNFDAERDALNIETAVKTKGVDEVTIVNILTNRSNVQRQDIAFAYQRRTKKELPSALKSALSGHLETVILGLLKTPAQYDASELKASMKGLGTDEDSLIEIICSRTNQELQEINRVYKEMYKTDLEKDIISDTSGDFRKLMVALAKGRRAEDGSVIDYELIDQDARELYDAGVKRKGTDVPKWISIMTERSVCHLQKVFERYKSYSPYDMLESIKKEVKGDLENAFLNLVQCIQNKPLYFADRLYDSMKGKGTRDKVLIRIMVSRSEVDMLKIRSEFKRKYGKSLYYYIQQDTKGDYQKALLYLCGGDD.

N-acetylserine is present on Ser2. The S100A10-binding site stretch occupies residues 2–24 (STVHEILCKLSLEGDHSTPPSAY). Tyr24 is modified (phosphotyrosine; by SRC). Ser26 carries the post-translational modification Phosphoserine; by PKC. Annexin repeat units follow at residues 33–104 (FDAE…GLLK) and 105–176 (TPAQ…ALAK). The residue at position 49 (Lys49) is an N6-acetyllysine; alternate. A Glycyl lysine isopeptide (Lys-Gly) (interchain with G-Cter in SUMO1); alternate cross-link involves residue Lys49. Lys49 participates in a covalent cross-link: Glycyl lysine isopeptide (Lys-Gly) (interchain with G-Cter in SUMO2); alternate. The residue at position 152 (Lys152) is an N6-acetyllysine. Ser184 is modified (phosphoserine). 2 Annexin repeats span residues 189-261 (ELID…NLVQ) and 265-336 (NKPL…YLCG). At Tyr199 the chain carries Phosphotyrosine. Lys227 carries the post-translational modification N6-acetyllysine.

Belongs to the annexin family. In terms of assembly, heterotetramer containing 2 light chains of S100A10/p11 and 2 heavy chains of ANXA2/p36. Interacts with ATP1B1. Interacts with DYSF. Interacts with COCH. Interacts (via repeat Annexin 1) with PCSK9 (via the C-terminal domain); the interaction inhibits the degradation of LDLR. Interacts with CEACAM1 (via the cytoplasmic domain); this interaction is regulated by phosphorylation of CEACAM1. Interacts with APPL2 and APPL1; targets APPL2 to endosomes and acting in parallel to RAB5A. Interacts with S100A4. May interact with UBAP2. Interacts with PLEKHG4B; this interaction is required for PLEKHG4B localization to cell-cell adhesions. Interacts with FAM13A. Interacts with salivary cystatin-L2 (via loop 2) from the tick Ixodes scapularis; the interaction results in reduced activation of mouse NLRC4 inflammasome formation upon Anaplasma phagocytophilum infection. Post-translationally, ISGylated.

It localises to the secreted. Its subcellular location is the extracellular space. The protein resides in the extracellular matrix. The protein localises to the basement membrane. It is found in the melanosome. It localises to the early endosome. Calcium-regulated membrane-binding protein whose affinity for calcium is greatly enhanced by anionic phospholipids. It binds two calcium ions with high affinity. May be involved in heat-stress response. Inhibits PCSK9-enhanced LDLR degradation, probably reduces PCSK9 protein levels via a translational mechanism but also competes with LDLR for binding with PCSK9. Binds to endosomes damaged by phagocytosis of particulate wear debris and participates in endosomal membrane stabilization, thereby limiting NLRP3 inflammasome activation. Required for endothelial cell surface plasmin generation and may support fibrinolytic surveillance and neoangiogenesis. Its function is as follows. (Microbial infection) Regulates the formation of the NLRC4 inflammasome triggered by Anaplasma phagocytophilum infection. Functionally, (Microbial infection) Protects against Klebsiella pneumoniae infection. Attenuates bacteria-induced pulmonary inflammation and promotes intro-abdominal pathogen clearance. Promotes anti-inflammatory responses by facilitating TLR4 internalization and translocation into early endosomal membranes; this leads to activation of TRAM-dependent endosomal signaling and release of anti-inflammatory cytokines. In terms of biological role, (Microbial infection) Promotes macrophage phagocytic efficiency towards Cryptococcus neoformans and ability to control fungal infection inside the cells. (Microbial infection) Contributes to protection against Pseudomonas aeruginosa infection by regulating autophagy via the AKT1-mTOR-ULK1/2 signaling pathway and activation of Rho GTPases via FAM13A-mediated mechanism. The sequence is that of Annexin A2 (Anxa2) from Mus musculus (Mouse).